The sequence spans 350 residues: Holliday junction branch migration complex subunit RuvB (350 aa).

The tract at residues 1–182 (MEDRIVTPLN…FGVLCPMDFY (182 aa)) is large ATPase domain (RuvB-L). Residues Leu-21, Arg-22, Gly-63, Lys-66, Thr-67, Thr-68, 129–131 (EDY), Arg-172, Tyr-182, and Arg-219 each bind ATP. A Mg(2+)-binding site is contributed by Thr-67. A small ATPAse domain (RuvB-S) region spans residues 183-253 (DQEELSEIVV…TSKAALELLE (71 aa)). The interval 256 to 350 (KEGFDSIDNK…KQSSLFDGEV (95 aa)) is head domain (RuvB-H). Arg-311 and Arg-316 together coordinate DNA.

This sequence belongs to the RuvB family. In terms of assembly, homohexamer. Forms an RuvA(8)-RuvB(12)-Holliday junction (HJ) complex. HJ DNA is sandwiched between 2 RuvA tetramers; dsDNA enters through RuvA and exits via RuvB. An RuvB hexamer assembles on each DNA strand where it exits the tetramer. Each RuvB hexamer is contacted by two RuvA subunits (via domain III) on 2 adjacent RuvB subunits; this complex drives branch migration. In the full resolvosome a probable DNA-RuvA(4)-RuvB(12)-RuvC(2) complex forms which resolves the HJ.

The protein resides in the cytoplasm. It catalyses the reaction ATP + H2O = ADP + phosphate + H(+). Functionally, the RuvA-RuvB-RuvC complex processes Holliday junction (HJ) DNA during genetic recombination and DNA repair, while the RuvA-RuvB complex plays an important role in the rescue of blocked DNA replication forks via replication fork reversal (RFR). RuvA specifically binds to HJ cruciform DNA, conferring on it an open structure. The RuvB hexamer acts as an ATP-dependent pump, pulling dsDNA into and through the RuvAB complex. RuvB forms 2 homohexamers on either side of HJ DNA bound by 1 or 2 RuvA tetramers; 4 subunits per hexamer contact DNA at a time. Coordinated motions by a converter formed by DNA-disengaged RuvB subunits stimulates ATP hydrolysis and nucleotide exchange. Immobilization of the converter enables RuvB to convert the ATP-contained energy into a lever motion, pulling 2 nucleotides of DNA out of the RuvA tetramer per ATP hydrolyzed, thus driving DNA branch migration. The RuvB motors rotate together with the DNA substrate, which together with the progressing nucleotide cycle form the mechanistic basis for DNA recombination by continuous HJ branch migration. Branch migration allows RuvC to scan DNA until it finds its consensus sequence, where it cleaves and resolves cruciform DNA. This chain is Holliday junction branch migration complex subunit RuvB, found in Clostridium kluyveri (strain NBRC 12016).